A 237-amino-acid chain; its full sequence is Pre-protein VI (237 aa).

Residues 1–32 (MDDPFSTLAPRRGTQPLLSNWATIGISELHGG) constitute a propeptide that is removed on maturation. The interval 33–57 (ALGWGSWWSNLSRLGSSFGSNLKNL) is amphipathic alpha-helix essential for membrane lytic activity. The interval 35 to 56 (GWGSWWSNLSRLGSSFGSNLKN) is involved in endosomal membrane lysis. Positions 51 to 77 (GSNLKNLGLKAWNSSTGQALRQHLKDT) are interaction with hexon protein. The Nuclear export signal motif lies at 70–79 (LRQHLKDTNL). A Phosphothreonine; by host modification is found at threonine 146. The Nuclear export signal signature appears at 218-229 (GTLDSIMGLGLQ). Residues 220-226 (LDSIMGL) form an interaction with hexon protein region. The tract at residues 227–237 (GLQPIKRRRCF) is binds to importin alpha/beta, involved in hexon nuclear import. A Nuclear localization signal motif is present at residues 232-235 (KRRR).

It belongs to the adenoviridae protein VI family. As to quaternary structure, interacts with hexon protein; this interaction allows nuclear import of hexon trimers and possibly pre-capsid assembly. Interacts (via C-terminal NLS) with importin alpha/beta. Interacts (via PPxY motif) with host NEDD4 ubiquitine ligase; this interaction might play a role in virus intracellular transport during entry. Part of a complex composed of the core-capsid bridging protein, the endosome lysis protein VI and the hexon-linking protein VIII; these interactions bridge the virus core to the capsid. Interacts with peripentonal hexons; this interaction stabilizes the capsid by gluing two peripentonal hexons together and joining them with an adjacent group-of-nine hexon. In terms of assembly, heterodimer with the viral protease; disulfide-linked. Interacts with the viral protease. In terms of processing, ubiquitinated by Nedd4 following partial capsid disassembly; which might play a role in intracellular virus movement during entry. Post-translationally, contains the major nuclear import and export signals. Proteolytically removed during virion maturation. The processing of the C-terminus turns the precursor into a mature viral structural protein and abrogates its ability to promote hexon import and act as a potential chaperone protein.

It localises to the host nucleus. It is found in the host cytoplasm. Its subcellular location is the virion. In terms of biological role, during virus assembly, promotes hexon trimers nuclear import through nuclear pore complexes via an importin alpha/beta-dependent mechanism. By analogy to herpesviruses capsid assembly, might act as a chaperone to promote the formation of the icosahedral capsid. Functionally, structural component of the virion that provides increased stability to the particle shell through its interaction with the core-capsid bridging protein and the hexon-linking protein VIII. Fibers shedding during virus entry into host cell allows the endosome lysis protein to be exposed as a membrane-lytic peptide. Exhibits pH-independent membrane fragmentation activity and probably mediates viral rapid escape from host endosome via organellar membrane lysis. It is not clear if it then remains partially associated with the capsid and involved in the intracellular microtubule-dependent transport of capsid to the nucleus, or if it is lost during endosomal penetration. Cofactor that activates the viral protease. Binds to viral protease in a 1:1 ratio. The polypeptide is Pre-protein VI (Mus musculus (Mouse)).